The primary structure comprises 243 residues: Membrane selenoprotein (243 aa).

A disordered region spans residues G12–E63. A non-standard amino acid (selenocysteine) is located at residue U20. Polar residues-rich tracts occupy residues I30–K43 and G53–E63. The next 4 membrane-spanning stretches (helical) occupy residues I74–I94, V102–L122, I144–L164, and V199–G219. Position 88 (U88) is a non-standard amino acid, selenocysteine.

The protein localises to the membrane. This chain is Membrane selenoprotein (msp), found in Dictyostelium discoideum (Social amoeba).